A 442-amino-acid chain; its full sequence is Ribosomal protein uS12 methylthiotransferase RimO (442 aa).

The MTTase N-terminal domain occupies 8 to 118 (PKVGFVSLGC…VLGHVHKYVE (111 aa)). [4Fe-4S] cluster-binding residues include cysteine 17, cysteine 53, cysteine 82, cysteine 150, cysteine 154, and cysteine 157. Residues 136-373 (LTPRHYAYLK…MELQQQVSIR (238 aa)) enclose the Radical SAM core domain. The TRAM domain occupies 376 to 442 (ARKVGKEMLV…EYDLWASLID (67 aa)).

The protein belongs to the methylthiotransferase family. RimO subfamily. [4Fe-4S] cluster is required as a cofactor.

It localises to the cytoplasm. The enzyme catalyses L-aspartate(89)-[ribosomal protein uS12]-hydrogen + (sulfur carrier)-SH + AH2 + 2 S-adenosyl-L-methionine = 3-methylsulfanyl-L-aspartate(89)-[ribosomal protein uS12]-hydrogen + (sulfur carrier)-H + 5'-deoxyadenosine + L-methionine + A + S-adenosyl-L-homocysteine + 2 H(+). Its function is as follows. Catalyzes the methylthiolation of an aspartic acid residue of ribosomal protein uS12. The sequence is that of Ribosomal protein uS12 methylthiotransferase RimO from Aeromonas hydrophila subsp. hydrophila (strain ATCC 7966 / DSM 30187 / BCRC 13018 / CCUG 14551 / JCM 1027 / KCTC 2358 / NCIMB 9240 / NCTC 8049).